A 589-amino-acid chain; its full sequence is Heterogeneous nuclear ribonucleoprotein L (589 aa).

Positions Met-1 to Leu-16 are enriched in basic residues. A disordered region spans residues Met-1 to Ala-100. Basic and acidic residues predominate over residues Glu-17 to Arg-27. Positions Ala-38 to Gly-54 are enriched in gly residues. Ser-52 bears the Phosphoserine mark. Glycyl lysine isopeptide (Lys-Gly) (interchain with G-Cter in SUMO2) cross-links involve residues Lys-59 and Lys-62. Residues Gln-69–Glu-90 show a composition bias toward gly residues. At Ser-101 the chain carries Phosphoserine. One can recognise an RRM 1 domain in the interval Pro-102–Ser-176. Residue Lys-136 forms a Glycyl lysine isopeptide (Lys-Gly) (interchain with G-Cter in SUMO2) linkage. The residue at position 185 (Ser-185) is a Phosphoserine. Positions Ser-193–Pro-270 constitute an RRM 2 domain. At Lys-269 the chain carries N6-acetyllysine. Residues Asp-284–Asn-301 show a composition bias toward polar residues. The tract at residues Asp-284–His-378 is disordered. Residues Ser-291 and Ser-298 each carry the phosphoserine modification. A Glycyl lysine isopeptide (Lys-Gly) (interchain with G-Cter in SUMO2) cross-link involves residue Lys-302. An asymmetric dimethylarginine mark is found at Arg-354 and Arg-358. The span at Gly-364–Tyr-375 shows a compositional bias: pro residues. A Phosphoserine modification is found at Ser-381. RRM domains follow at residues Pro-382–Ser-478 and Arg-495–Ser-583. Phosphoserine; by CaMK4 is present on Ser-544. Lys-568 is covalently cross-linked (Glycyl lysine isopeptide (Lys-Gly) (interchain with G-Cter in SUMO2)).

Identified in a IGF2BP1-dependent mRNP granule complex containing untranslated mRNAs. Interacts with HNRNPLL. Interacts with APEX1; the interaction is DNA-dependent. Component of a complex with SETD2. Interacts with ELAVL1. Part of a transcription inhibitory ribonucleoprotein complex composed at least of the circular RNA circZNF827, ZNF827 and HNRNPK. Interacts with CHD8 in an RNA-dependent manner. Several isoelectric forms of the L protein are probably the results of post-translational modifications. In terms of processing, phosphorylation at Ser-544 by CaMK4 enhances interaction with a CaMK4-responsive RNA element (CaRRE1), and prevents inclusion of the stress axis-regulated exon (STREX) of the KCNMA1 potassium channel transcripts upon membrane depolarization.

The protein localises to the nucleus. The protein resides in the nucleoplasm. It localises to the cytoplasm. Its function is as follows. Splicing factor binding to exonic or intronic sites and acting as either an activator or repressor of exon inclusion. Exhibits a binding preference for CA-rich elements. Component of the heterogeneous nuclear ribonucleoprotein (hnRNP) complexes and associated with most nascent transcripts. Associates, together with APEX1, to the negative calcium responsive element (nCaRE) B2 of the APEX2 promoter. As part of a ribonucleoprotein complex composed at least of ZNF827, HNRNPK and the circular RNA circZNF827 that nucleates the complex on chromatin, may negatively regulate the transcription of genes involved in neuronal differentiation. Regulates alternative splicing of a core group of genes involved in neuronal differentiation, likely by mediating H3K36me3-coupled transcription elongation and co-transcriptional RNA processing via interaction with CHD8. In Homo sapiens (Human), this protein is Heterogeneous nuclear ribonucleoprotein L (HNRNPL).